A 155-amino-acid polypeptide reads, in one-letter code: DNA gyrase inhibitor (155 aa).

Belongs to the DNA gyrase inhibitor family. In terms of assembly, interacts with DNA gyrase.

The protein resides in the cytoplasm. Its function is as follows. Inhibits the supercoiling activity of DNA gyrase. Acts by inhibiting DNA gyrase at an early step, prior to (or at the step of) binding of DNA by the gyrase. It protects cells against toxins that target DNA gyrase, by inhibiting activity of these toxins and reducing the formation of lethal double-strand breaks in the cell. This Citrobacter koseri (strain ATCC BAA-895 / CDC 4225-83 / SGSC4696) protein is DNA gyrase inhibitor.